A 435-amino-acid chain; its full sequence is Enolase (435 aa).

A (2R)-2-phosphoglycerate-binding site is contributed by Gln163. Glu205 serves as the catalytic Proton donor. The Mg(2+) site is built by Asp243, Glu292, and Asp319. Lys344, Arg373, Ser374, and Lys395 together coordinate (2R)-2-phosphoglycerate. The active-site Proton acceptor is Lys344.

Belongs to the enolase family. As to quaternary structure, homooctamer, a tetramer of homodimers. The cofactor is Mg(2+).

Its subcellular location is the cytoplasm. It localises to the secreted. The protein localises to the cell surface. It is found in the cell wall. The catalysed reaction is (2R)-2-phosphoglycerate = phosphoenolpyruvate + H2O. The protein operates within carbohydrate degradation; glycolysis; pyruvate from D-glyceraldehyde 3-phosphate: step 4/5. Catalyzes the reversible conversion of 2-phosphoglycerate (2-PG) into phosphoenolpyruvate (PEP). It is essential for the degradation of carbohydrates via glycolysis. In terms of biological role, 'Moonlights' as a plasminogen receptor. Binds plasminogen and more weakly plasmin when expressed on the bacterial cell surface; probably has more than one plasmin(ogen) binding site, may bind via Lys residues. Plasminogen binding potentially allows the bacterium to acquire surface-associated proteolytic activity, which in turn contributes to tissue invasion and virulence. The protein is Enolase of Streptococcus pyogenes serotype M6 (strain ATCC BAA-946 / MGAS10394).